Reading from the N-terminus, the 1169-residue chain is Chromosome partition protein Smc (1169 aa).

Residue 32–39 coordinates ATP; the sequence is PNGCGKSN. Coiled-coil stretches lie at residues 170-507 and 659-1030; these read ISKY…ALGE and REQQ…FQSL.

It belongs to the SMC family. As to quaternary structure, homodimer.

The protein localises to the cytoplasm. Its function is as follows. Required for chromosome condensation and partitioning. This is Chromosome partition protein Smc from Coxiella burnetii (strain RSA 493 / Nine Mile phase I).